A 347-amino-acid chain; its full sequence is D-fructose 1,6-bisphosphatase class 2/sedoheptulose 1,7-bisphosphatase (347 aa).

The Mn(2+) site is built by Asp33, Glu57, Asp97, and Glu100. Substrate is bound by residues 100–102, Tyr131, 176–178, and 198–200; these read EGT, RKR, and DGD. A Mn(2+)-binding site is contributed by Glu225.

This sequence belongs to the FBPase class 2 family. Homotetramer. Mn(2+) is required as a cofactor.

It carries out the reaction beta-D-fructose 1,6-bisphosphate + H2O = beta-D-fructose 6-phosphate + phosphate. It catalyses the reaction D-sedoheptulose 1,7-bisphosphate + H2O = D-sedoheptulose 7-phosphate + phosphate. It functions in the pathway carbohydrate biosynthesis; Calvin cycle. Catalyzes the hydrolysis of fructose 1,6-bisphosphate (Fru 1,6-P2) and sedoheptulose 1,7-bisphosphate (Sed 1,7-P2) to fructose 6-phosphate and sedoheptulose 7-phosphate, respectively. The polypeptide is D-fructose 1,6-bisphosphatase class 2/sedoheptulose 1,7-bisphosphatase (Synechococcus sp. (strain JA-2-3B'a(2-13)) (Cyanobacteria bacterium Yellowstone B-Prime)).